The chain runs to 61 residues: Small ribosomal subunit protein uS14 (61 aa).

Zn(2+)-binding residues include C24, C27, C40, and C43.

This sequence belongs to the universal ribosomal protein uS14 family. Zinc-binding uS14 subfamily. As to quaternary structure, part of the 30S ribosomal subunit. Contacts proteins S3 and S10. Requires Zn(2+) as cofactor.

Binds 16S rRNA, required for the assembly of 30S particles and may also be responsible for determining the conformation of the 16S rRNA at the A site. The sequence is that of Small ribosomal subunit protein uS14 from Mycoplasmopsis agalactiae (strain NCTC 10123 / CIP 59.7 / PG2) (Mycoplasma agalactiae).